Reading from the N-terminus, the 457-residue chain is Variant surface glycoprotein 20 (457 aa).

The first 20 residues, 1-20 (MFTQAVIALIGLVSIRTGKT), serve as a signal peptide directing secretion. Polar residues predominate over residues 385 to 397 (RQTASGDDQSAEN). Residues 385–406 (RQTASGDDQSAENQCGGKKEDE) are disordered. N-linked (GlcNAc...) asparagine glycosylation occurs at asparagine 436. A lipid anchor (GPI-anchor amidated serine) is attached at serine 440. A propeptide spans 441-457 (NSFVIKKAPLWLAFLLF) (removed in mature form).

The protein localises to the cell membrane. Its function is as follows. VSG forms a coat on the surface of the parasite. The trypanosome evades the immune response of the host by expressing a series of antigenically distinct VSGs from an estimated 1000 VSG genes. The chain is Variant surface glycoprotein 20 from Trypanosoma equiperdum.